The following is a 97-amino-acid chain: Putative membrane protein insertion efficiency factor (97 aa).

The segment at 72-97 (VPGAEPDQEQHQCTPLCNHHSEDHSQ) is disordered.

This sequence belongs to the UPF0161 family.

The protein localises to the cell inner membrane. Functionally, could be involved in insertion of integral membrane proteins into the membrane. The protein is Putative membrane protein insertion efficiency factor of Alcanivorax borkumensis (strain ATCC 700651 / DSM 11573 / NCIMB 13689 / SK2).